The following is a 747-amino-acid chain: Catalase-peroxidase (747 aa).

A signal peptide spans 1 to 27 (MRKFSVSKVALLAATMAPALLPAAARA). Positions 116–238 (WHSAGTYRTA…LAAVQMGLIY (123 aa)) form a cross-link, tryptophyl-tyrosyl-methioninium (Trp-Tyr) (with M-264). Histidine 117 serves as the catalytic Proton acceptor. The segment at residues 238–264 (YVNPEGPNGNPDPLLAAKDIRETFGRM) is a cross-link (tryptophyl-tyrosyl-methioninium (Tyr-Met) (with W-116)). Residue histidine 279 coordinates heme b.

This sequence belongs to the peroxidase family. Peroxidase/catalase subfamily. In terms of assembly, homodimer or homotetramer. Heme b is required as a cofactor. Post-translationally, formation of the three residue Trp-Tyr-Met cross-link is important for the catalase, but not the peroxidase activity of the enzyme.

It carries out the reaction H2O2 + AH2 = A + 2 H2O. The catalysed reaction is 2 H2O2 = O2 + 2 H2O. In terms of biological role, bifunctional enzyme with both catalase and broad-spectrum peroxidase activity. The sequence is that of Catalase-peroxidase from Novosphingobium aromaticivorans (strain ATCC 700278 / DSM 12444 / CCUG 56034 / CIP 105152 / NBRC 16084 / F199).